Here is a 315-residue protein sequence, read N- to C-terminus: Phosphomutase-like protein 3 (315 aa).

Residues 1–19 (MQQFLTLGALWTLFNVATT) form the signal peptide. Residue histidine 77 is the Tele-phosphohistidine intermediate of the active site. N-linked (GlcNAc...) asparagine glycans are attached at residues asparagine 88 and asparagine 154. Glutamate 173 serves as the catalytic Proton donor/acceptor. N-linked (GlcNAc...) asparagine glycosylation occurs at asparagine 185. Asparagine 286 carries the GPI-anchor amidated asparagine lipid modification. Positions 287–315 (DAWDTFKDWCPNPPASISGTATSTATGSA) are cleaved as a propeptide — removed in mature form.

It belongs to the phosphoglycerate mutase family.

The protein localises to the cell membrane. This Candida albicans (strain SC5314 / ATCC MYA-2876) (Yeast) protein is Phosphomutase-like protein 3 (PGA12).